We begin with the raw amino-acid sequence, 396 residues long: NADH-quinone oxidoreductase subunit D (396 aa).

The protein belongs to the complex I 49 kDa subunit family. As to quaternary structure, NDH-1 is composed of 14 different subunits. Subunits NuoB, C, D, E, F, and G constitute the peripheral sector of the complex.

It localises to the cell inner membrane. It carries out the reaction a quinone + NADH + 5 H(+)(in) = a quinol + NAD(+) + 4 H(+)(out). Functionally, NDH-1 shuttles electrons from NADH, via FMN and iron-sulfur (Fe-S) centers, to quinones in the respiratory chain. The immediate electron acceptor for the enzyme in this species is believed to be ubiquinone. Couples the redox reaction to proton translocation (for every two electrons transferred, four hydrogen ions are translocated across the cytoplasmic membrane), and thus conserves the redox energy in a proton gradient. The protein is NADH-quinone oxidoreductase subunit D of Chelativorans sp. (strain BNC1).